A 118-amino-acid chain; its full sequence is Large ribosomal subunit protein bL17 (118 aa).

It belongs to the bacterial ribosomal protein bL17 family. In terms of assembly, part of the 50S ribosomal subunit. Contacts protein L32.

In Campylobacter fetus subsp. fetus (strain 82-40), this protein is Large ribosomal subunit protein bL17.